Here is a 140-residue protein sequence, read N- to C-terminus: Nucleoside diphosphate kinase (140 aa).

ATP contacts are provided by Lys-11, Phe-59, Arg-87, Thr-93, Arg-104, and Asn-114. Catalysis depends on His-117, which acts as the Pros-phosphohistidine intermediate.

This sequence belongs to the NDK family. In terms of assembly, homotetramer. Mg(2+) serves as cofactor.

The protein localises to the cytoplasm. The catalysed reaction is a 2'-deoxyribonucleoside 5'-diphosphate + ATP = a 2'-deoxyribonucleoside 5'-triphosphate + ADP. It catalyses the reaction a ribonucleoside 5'-diphosphate + ATP = a ribonucleoside 5'-triphosphate + ADP. Its function is as follows. Major role in the synthesis of nucleoside triphosphates other than ATP. The ATP gamma phosphate is transferred to the NDP beta phosphate via a ping-pong mechanism, using a phosphorylated active-site intermediate. In Cereibacter sphaeroides (strain ATCC 17025 / ATH 2.4.3) (Rhodobacter sphaeroides), this protein is Nucleoside diphosphate kinase.